Consider the following 815-residue polypeptide: Probable inorganic carbon transporter subunit DabA (815 aa).

Residues Cys334, Asp336, His507, and Cys522 each coordinate Zn(2+).

This sequence belongs to the inorganic carbon transporter (TC 9.A.2) DabA family. In terms of assembly, forms a complex with DabB. Zn(2+) serves as cofactor.

It localises to the cell inner membrane. Part of an energy-coupled inorganic carbon pump. This chain is Probable inorganic carbon transporter subunit DabA, found in Ectopseudomonas mendocina (strain ymp) (Pseudomonas mendocina).